Here is a 396-residue protein sequence, read N- to C-terminus: Acetate kinase (396 aa).

Mg(2+) is bound at residue Asn7. Position 14 (Lys14) interacts with ATP. Arg88 is a binding site for substrate. The Proton donor/acceptor role is filled by Asp145. ATP contacts are provided by residues 203–207 (HAGNG), 278–280 (DAR), and 326–330 (GIGEN). Glu379 contacts Mg(2+).

Belongs to the acetokinase family. As to quaternary structure, homodimer. Requires Mg(2+) as cofactor. Mn(2+) serves as cofactor.

Its subcellular location is the cytoplasm. The catalysed reaction is acetate + ATP = acetyl phosphate + ADP. Its pathway is metabolic intermediate biosynthesis; acetyl-CoA biosynthesis; acetyl-CoA from acetate: step 1/2. Functionally, catalyzes the formation of acetyl phosphate from acetate and ATP. Can also catalyze the reverse reaction. This is Acetate kinase from Phytoplasma australiense.